A 199-amino-acid polypeptide reads, in one-letter code: Mediator of RNA polymerase II transcription subunit 29 (199 aa).

The span at 1–17 (MAAPQPQAAAVSSASGV) shows a compositional bias: low complexity. The disordered stretch occupies residues 1–47 (MAAPQPQAAAVSSASGVSGPGSAGGPGPQQQPQPTQLVGSAQSGLLQ). At alanine 2 the chain carries N-acetylalanine. A compositionally biased stretch (gly residues) spans 18 to 27 (SGPGSAGGPG). A compositionally biased stretch (low complexity) spans 28-47 (PQQQPQPTQLVGSAQSGLLQ).

It belongs to the Mediator complex subunit 29 family. In terms of assembly, component of the Mediator complex, which is composed of MED1, MED4, MED6, MED7, MED8, MED9, MED10, MED11, MED12, MED13, MED13L, MED14, MED15, MED16, MED17, MED18, MED19, MED20, MED21, MED22, MED23, MED24, MED25, MED26, MED27, MED29, MED30, MED31, CCNC, CDK8 and CDC2L6/CDK11. The MED12, MED13, CCNC and CDK8 subunits form a distinct module termed the CDK8 module. Mediator containing the CDK8 module is less active than Mediator lacking this module in supporting transcriptional activation. Individual preparations of the Mediator complex lacking one or more distinct subunits have been variously termed ARC, CRSP, DRIP, PC2, SMCC and TRAP. Associates with the MED18/MED20 heteromer.

It localises to the nucleus. Functionally, component of the Mediator complex, a coactivator involved in the regulated transcription of nearly all RNA polymerase II-dependent genes. Mediator functions as a bridge to convey information from gene-specific regulatory proteins to the basal RNA polymerase II transcription machinery. Mediator is recruited to promoters by direct interactions with regulatory proteins and serves as a scaffold for the assembly of a functional preinitiation complex with RNA polymerase II and the general transcription factors. In Mus musculus (Mouse), this protein is Mediator of RNA polymerase II transcription subunit 29 (Med29).